Reading from the N-terminus, the 435-residue chain is Eukaryotic peptide chain release factor subunit 1-2 (435 aa).

At Ala2 the chain carries N-acetylalanine.

Belongs to the eukaryotic release factor 1 family. Heterodimer of two subunits, one of which binds GTP. Interacts with OR.

The protein localises to the cytoplasm. Its function is as follows. Directs the termination of nascent peptide synthesis (translation) in response to the termination codons UAA, UAG and UGA. Modulates plant growth and development. The protein is Eukaryotic peptide chain release factor subunit 1-2 of Brassica oleracea var. botrytis (Cauliflower).